We begin with the raw amino-acid sequence, 138 residues long: Thyrotropin subunit beta (138 aa).

An N-terminal signal peptide occupies residues 1 to 20 (MNAVVLFSVLFALACGQVSS). Intrachain disulfides connect Cys22–Cys72, Cys36–Cys87, Cys39–Cys125, Cys47–Cys103, Cys51–Cys105, and Cys108–Cys115. Asn43 is a glycosylation site (N-linked (GlcNAc...) asparagine). The propeptide occupies 133 to 138 (LGGFSG).

This sequence belongs to the glycoprotein hormones subunit beta family. In terms of assembly, heterodimer of a common alpha chain and a unique beta chain which confers biological specificity to thyrotropin, lutropin, follitropin and gonadotropin.

It is found in the secreted. In terms of biological role, indispensable for the control of thyroid structure and metabolism. In Rattus norvegicus (Rat), this protein is Thyrotropin subunit beta (Tshb).